Here is a 930-residue protein sequence, read N- to C-terminus: MKLKETLNLGKTAFPMRAGLPNKEPQWQKQWDEANIYAKRQELNANKPAFFLHDGPPYANGNIHVGHALNKISKDIIIRSKSMSGFRAPYIPGWDTHGLPIEQVLAKKGVKRKEIDLADYLDMCRQYALSQVDKQRQDFKRLGVSGDWENPYITLVPKYEAAQIRVFGAMADKGYIYHGAKPVYWSWSSESALAEAEIEYHDIDSTSLYYANRVKDGKDILDTDTYIVVWTTTPFTITASRGLTVGPDIDYVVVKPANDERKFLVAQALLSELAERFAWDNPQVLATHKGIELDRIVTIHPWDDNVEELVMNGDHVTLDSGTGIVHTAPGFGEDDYNVGVKYGLDVVVTVNERGIMMENAGPDFEGQFYDKVLPTVKEKLGDLLLASEVITHSYPFDWRTKKPIIWRAVPQWFASVSKFRQDILDEIDKVHFYPAWGKTRLYNMIRDRGDWVISRQRAWGVPLPIFYAEDGTAIMTKEVTDHIANLFEEHGSVIWWQREAKDLLPEGFTHPGSPNGEFTKENDIMDVWFDSGSSWNGVLNTREDLGYPADLYLEGSDQYRGWFNSSLITSVAVNGHAPYKSVLSQGFVLDGKGEKMSKSKGNIISPNDVAKQYGAEILRLWVASVDTDSDVRVSMEILGQVSETYRKIRNTLRFLIANTTDFNPYINKIAFEDLRSVDKYMLIKFNQLVSVINRAYSHYDFMTIYKAVVNFVTVDLSAFYLDFAKDVVYIEAADDLARRQMQTVFYEILVNITKLLTPILPHTSEEIWSYLEHEEEAFVQLAEMPEAQEFANQDEILDTWSAFMSLRDQAQKALEEARNAKIIGKSLEAHLTVYASEEVKTLLTALDSNIAQLLIVSQLTVTQEQAPKNALVFEDVAFSVEHARGHVCDRCRRIDETVKERPYHVTICNHCAAIVENHFPEAVRQGFESK.

The 'HIGH' region motif lies at 57-67; sequence PYANGNIHVGH. Glu554 serves as a coordination point for L-isoleucyl-5'-AMP. The 'KMSKS' region signature appears at 595–599; it reads KMSKS. Residue Lys598 coordinates ATP. Zn(2+) contacts are provided by Cys888, Cys891, Cys908, and Cys911.

It belongs to the class-I aminoacyl-tRNA synthetase family. IleS type 1 subfamily. In terms of assembly, monomer. Zn(2+) serves as cofactor.

Its subcellular location is the cytoplasm. It carries out the reaction tRNA(Ile) + L-isoleucine + ATP = L-isoleucyl-tRNA(Ile) + AMP + diphosphate. Functionally, catalyzes the attachment of isoleucine to tRNA(Ile). As IleRS can inadvertently accommodate and process structurally similar amino acids such as valine, to avoid such errors it has two additional distinct tRNA(Ile)-dependent editing activities. One activity is designated as 'pretransfer' editing and involves the hydrolysis of activated Val-AMP. The other activity is designated 'posttransfer' editing and involves deacylation of mischarged Val-tRNA(Ile). The chain is Isoleucine--tRNA ligase from Streptococcus mutans serotype c (strain ATCC 700610 / UA159).